The following is a 241-amino-acid chain: Uridylate kinase (241 aa).

15 to 18 contacts ATP; it reads KLSG. The tract at residues 23–28 is involved in allosteric activation by GTP; that stretch reads GSEGFG. Glycine 57 contacts UMP. 2 residues coordinate ATP: glycine 58 and arginine 62. Residues aspartate 77 and 138–145 contribute to the UMP site; that span reads TGNPFFTT. ATP is bound by residues threonine 165, phenylalanine 171, and aspartate 174.

This sequence belongs to the UMP kinase family. Homohexamer.

Its subcellular location is the cytoplasm. It carries out the reaction UMP + ATP = UDP + ADP. It functions in the pathway pyrimidine metabolism; CTP biosynthesis via de novo pathway; UDP from UMP (UMPK route): step 1/1. Allosterically activated by GTP. Inhibited by UTP. Catalyzes the reversible phosphorylation of UMP to UDP. This chain is Uridylate kinase, found in Vibrio vulnificus (strain CMCP6).